We begin with the raw amino-acid sequence, 862 residues long: DNA topoisomerase 3-beta-1 (862 aa).

One can recognise a Toprim domain in the interval 3–153 (TVLMVAEKPS…EKTVFRARFS (151 aa)). The 423-residue stretch at 171-593 (DHNEALSVDA…HTLDVFKRKF (423 aa)) folds into the Topo IA-type catalytic domain. Y336 (O-(5'-phospho-DNA)-tyrosine intermediate) is an active-site residue. Basic residues predominate over residues 821–851 (PMHRGGPGRRQGRGRGRARRPPGKPNPRRPK). Residues 821–854 (PMHRGGPGRRQGRGRGRARRPPGKPNPRRPKDKM) form a disordered region.

It belongs to the type IA topoisomerase family. As to expression, isoform 1 is found in testis, heart and skeletal muscle. A 4 kb transcript which probably represents isoform 2 is found in thymus, kidney and pancreas.

The enzyme catalyses ATP-independent breakage of single-stranded DNA, followed by passage and rejoining.. Releases the supercoiling and torsional tension of DNA introduced during the DNA replication and transcription by transiently cleaving and rejoining one strand of the DNA duplex. Introduces a single-strand break via transesterification at a target site in duplex DNA. The scissile phosphodiester is attacked by the catalytic tyrosine of the enzyme, resulting in the formation of a DNA-(5'-phosphotyrosyl)-enzyme intermediate and the expulsion of a 3'-OH DNA strand. The free DNA strand than undergoes passage around the unbroken strand thus removing DNA supercoils. Finally, in the religation step, the DNA 3'-OH attacks the covalent intermediate to expel the active-site tyrosine and restore the DNA phosphodiester backbone. Possesses negatively supercoiled DNA relaxing activity. This is DNA topoisomerase 3-beta-1 (TOP3B) from Homo sapiens (Human).